The chain runs to 482 residues: Proline--tRNA ligase (482 aa).

The protein belongs to the class-II aminoacyl-tRNA synthetase family. ProS type 3 subfamily. Homodimer.

It localises to the cytoplasm. It carries out the reaction tRNA(Pro) + L-proline + ATP = L-prolyl-tRNA(Pro) + AMP + diphosphate. In terms of biological role, catalyzes the attachment of proline to tRNA(Pro) in a two-step reaction: proline is first activated by ATP to form Pro-AMP and then transferred to the acceptor end of tRNA(Pro). In Natronomonas pharaonis (strain ATCC 35678 / DSM 2160 / CIP 103997 / JCM 8858 / NBRC 14720 / NCIMB 2260 / Gabara) (Halobacterium pharaonis), this protein is Proline--tRNA ligase.